Reading from the N-terminus, the 96-residue chain is DNA-directed RNA polymerase subunit Rpo11 (96 aa).

It belongs to the archaeal Rpo11/eukaryotic RPB11/RPC19 RNA polymerase subunit family. In terms of assembly, part of the RNA polymerase complex.

It is found in the cytoplasm. It carries out the reaction RNA(n) + a ribonucleoside 5'-triphosphate = RNA(n+1) + diphosphate. In terms of biological role, DNA-dependent RNA polymerase (RNAP) catalyzes the transcription of DNA into RNA using the four ribonucleoside triphosphates as substrates. The protein is DNA-directed RNA polymerase subunit Rpo11 of Nanoarchaeum equitans (strain Kin4-M).